The following is a 921-amino-acid chain: DNA mismatch repair protein MutS 1 (921 aa).

619 to 626 (GPNMSGKS) is an ATP binding site. Residues 837–887 (FRDGAAQSGGAAAGSTAEPVATDGDPEHAPGEAAAEGPKGDERAASLDSET) are disordered. The segment covering 840 to 853 (GAAQSGGAAAGSTA) has biased composition (low complexity).

The protein belongs to the DNA mismatch repair MutS family.

Its function is as follows. This protein is involved in the repair of mismatches in DNA. It is possible that it carries out the mismatch recognition step. This protein has a weak ATPase activity. This is DNA mismatch repair protein MutS 1 from Haloarcula marismortui (strain ATCC 43049 / DSM 3752 / JCM 8966 / VKM B-1809) (Halobacterium marismortui).